The primary structure comprises 156 residues: MPRKGPAPKRPLVNDPVYGSQLVTQLVNKVLLKGKKSLAERIVYGALEQARDKTGTDPVITLKRALDNVKPALEVRSRRVGGATYQVPVEVRPDRSTTLALRWLIGYSRQRREKTMIERLANEILDASNGLGASVKRREDTHKMAEANRAFAHYRW.

It belongs to the universal ribosomal protein uS7 family. Part of the 30S ribosomal subunit. Contacts proteins S9 and S11.

Functionally, one of the primary rRNA binding proteins, it binds directly to 16S rRNA where it nucleates assembly of the head domain of the 30S subunit. Is located at the subunit interface close to the decoding center, probably blocks exit of the E-site tRNA. This is Small ribosomal subunit protein uS7 from Mycobacterium tuberculosis (strain CDC 1551 / Oshkosh).